We begin with the raw amino-acid sequence, 225 residues long: Ribosomal RNA large subunit methyltransferase E (225 aa).

Residues G64, W66, D93, D109, and D138 each contribute to the S-adenosyl-L-methionine site. The Proton acceptor role is filled by K178.

Belongs to the class I-like SAM-binding methyltransferase superfamily. RNA methyltransferase RlmE family.

The protein localises to the cytoplasm. The catalysed reaction is uridine(2552) in 23S rRNA + S-adenosyl-L-methionine = 2'-O-methyluridine(2552) in 23S rRNA + S-adenosyl-L-homocysteine + H(+). In terms of biological role, specifically methylates the uridine in position 2552 of 23S rRNA at the 2'-O position of the ribose in the fully assembled 50S ribosomal subunit. The chain is Ribosomal RNA large subunit methyltransferase E from Cupriavidus pinatubonensis (strain JMP 134 / LMG 1197) (Cupriavidus necator (strain JMP 134)).